The following is a 283-amino-acid chain: uncharacterized protein (283 aa).

The next 3 membrane-spanning stretches (helical) occupy residues 18 to 38 (VYDI…AKLI), 61 to 81 (VIYF…LGLD), and 94 to 114 (IVLG…IFLI).

Belongs to the MscS (TC 1.A.23) family.

It localises to the cell membrane. This is an uncharacterized protein from Archaeoglobus fulgidus (strain ATCC 49558 / DSM 4304 / JCM 9628 / NBRC 100126 / VC-16).